The sequence spans 632 residues: Palmitoyltransferase ZDHHC17 (632 aa).

Residues 1–304 (MQREEGFNTK…LKADKEFRQK (304 aa)) are Cytoplasmic-facing. Positions 11–305 (MADGPDEYDT…KADKEFRQKV (295 aa)) are necessary and sufficient for interaction with DNAJC5 and SNAP25. ANK repeat units follow at residues 51-86 (THIDDYSTWDIVKATQYGIYERCRELVEAGYDVRQP), 89-118 (ENVTLLHWAAINNRIDLVKYYISKGAIVDQ), 123-152 (LNSTPLHWATRQGHLSMVVQLMKYGADPSL), 156-185 (EGCSCIHLAAQFGHTSIVAYLIAKGQDVDM), 189-219 (NGMTPLMWAAYRTHSVDPTRLLLTFNVSVNL), 224-253 (HKNTALHWAVLAGNTTVISLLLEAGANVDA), and 257-286 (KGESALDLAKQRKNVWMINHLQEARQAKGY). 2 helical membrane-spanning segments follow: residues 305-325 (VMLGTPFLVIWLVGFIADLNI) and 326-346 (DSWLIKGLMYGGVWATVQFLS). The Cytoplasmic portion of the chain corresponds to 347 to 357 (KSFFDHSMHSA). The chain crosses the membrane as a helical span at residues 358–378 (LPLGIYLATKFWMYVTWFFWF). The Lumenal segment spans residues 379 to 381 (WND). The chain crosses the membrane as a helical span at residues 382-402 (LNFLFIHLPFLANSVALFYNF). Residues 403–480 (GKSWKSDPGI…GNCVGAGNHR (78 aa)) lie on the Cytoplasmic side of the membrane. Residues 437–487 (IFCSTCLIRKPVRSKHCGVCNRCIAKFDHHCPWVGNCVGAGNHRYFMGYLF) enclose the DHHC domain. Catalysis depends on Cys467, which acts as the S-palmitoyl cysteine intermediate. The helical transmembrane segment at 481 to 501 (YFMGYLFFLLFMICWMIYGCI) threads the bilayer. The Lumenal segment spans residues 502-529 (SYWGLHCETTYTKDGFWTYITQIATCSP). A helical transmembrane segment spans residues 530–550 (WMFWMFLNSVFHFMWVAVLLM). Residues 551-632 (CQMYQISCLG…QISGSGYQLV (82 aa)) are Cytoplasmic-facing.

It belongs to the DHHC palmitoyltransferase family. AKR/ZDHHC17 subfamily. In terms of assembly, interacts (via ANK repeats) with numerous proteins (via the consensus sequence motif [VIAP]-[VIT]-x-x-Q-P). Interacts (via ANK repeats) with CLIP3. Interacts (via ANK repeats) with HTT; this interaction is inversely correlated to the length of the polyglutamine tract added to the huntingtin protein in Huntington disease. Interacts (via ANK repeats) with DNAJC5 (via C-terminus). Interacts (via ANK repeats) with MAP6. Interacts (via ANK repeats) with SNAP23. Interacts (via ANK repeats) with SNAP25. Interacts (via ANK repeats) with EVL. Interacts with SPRED1 and SPRED3. Interacts with GPM6A and OPTN. May interact (via ANK repeats) with SPRED2. May interact with NTRK1; may regulate its localization and function. In terms of processing, autopalmitoylated. Autopalmitoylation has a regulatory role in ZDHHC17-mediated Mg(2+) transport. In terms of tissue distribution, expressed in all brain regions. Expression is highest in the cortex, cerebellum, occipital lobe and caudate and lowest in the spinal cord. Expression is also seen in testis, pancreas, heart and kidney.

It is found in the golgi apparatus membrane. It localises to the cytoplasmic vesicle membrane. The protein localises to the presynaptic cell membrane. The catalysed reaction is L-cysteinyl-[protein] + hexadecanoyl-CoA = S-hexadecanoyl-L-cysteinyl-[protein] + CoA. The enzyme catalyses L-cysteinyl-[protein] + tetradecanoyl-CoA = S-tetradecanoyl-L-cysteinyl-[protein] + CoA. It catalyses the reaction L-cysteinyl-[protein] + octadecanoyl-CoA = S-octadecanoyl-L-cysteinyl-[protein] + CoA. Functionally, palmitoyltransferase that catalyzes the addition of palmitate onto various protein substrates and is involved in a variety of cellular processes. Has no stringent fatty acid selectivity and in addition to palmitate can also transfer onto target proteins myristate from tetradecanoyl-CoA and stearate from octadecanoyl-CoA. Palmitoyltransferase specific for a subset of neuronal proteins, including SNAP25, DLG4/PSD95, GAD2, SYT1 and HTT. Also palmitoylates neuronal protein GPM6A as well as SPRED1 and SPRED3. Could also play a role in axonogenesis through the regulation of NTRK1 and the downstream ERK1/ERK2 signaling cascade. May be involved in the sorting or targeting of critical proteins involved in the initiating events of endocytosis at the plasma membrane. May play a role in Mg(2+) transport. Could also palmitoylate DNAJC5 and regulate its localization to the Golgi membrane. Palmitoylates CASP6, thereby preventing its dimerization and subsequent activation. This chain is Palmitoyltransferase ZDHHC17, found in Homo sapiens (Human).